The sequence spans 403 residues: Cytoplasmic tRNA 2-thiolation protein 2 (403 aa).

This sequence belongs to the CTU2/NCS2 family.

It is found in the cytoplasm. It participates in tRNA modification; 5-methoxycarbonylmethyl-2-thiouridine-tRNA biosynthesis. Plays a central role in 2-thiolation of mcm(5)S(2)U at tRNA wobble positions of tRNA(Lys), tRNA(Glu) and tRNA(Gln). May act by forming a heterodimer with NCS6/CTU1 that ligates sulfur from thiocarboxylated URM1 onto the uridine of tRNAs at wobble position. The sequence is that of Cytoplasmic tRNA 2-thiolation protein 2 from Drosophila willistoni (Fruit fly).